The chain runs to 286 residues: Pantothenate synthetase (286 aa).

30–37 lines the ATP pocket; sequence MGNLHAGH. His37 acts as the Proton donor in catalysis. (R)-pantoate is bound at residue Gln61. Gln61 contributes to the beta-alanine binding site. 149-152 contributes to the ATP binding site; that stretch reads GEKD. Gln155 contacts (R)-pantoate. Residues Val178 and 186-189 contribute to the ATP site; that span reads MSSR.

The protein belongs to the pantothenate synthetase family. In terms of assembly, homodimer.

It localises to the cytoplasm. It catalyses the reaction (R)-pantoate + beta-alanine + ATP = (R)-pantothenate + AMP + diphosphate + H(+). Its pathway is cofactor biosynthesis; (R)-pantothenate biosynthesis; (R)-pantothenate from (R)-pantoate and beta-alanine: step 1/1. Catalyzes the condensation of pantoate with beta-alanine in an ATP-dependent reaction via a pantoyl-adenylate intermediate. This chain is Pantothenate synthetase, found in Thioalkalivibrio sulfidiphilus (strain HL-EbGR7).